Reading from the N-terminus, the 155-residue chain is 3-hydroxyacyl-[acyl-carrier-protein] dehydratase FabZ (155 aa).

Residue His-61 is part of the active site.

Belongs to the thioester dehydratase family. FabZ subfamily.

The protein resides in the cytoplasm. The catalysed reaction is a (3R)-hydroxyacyl-[ACP] = a (2E)-enoyl-[ACP] + H2O. Involved in unsaturated fatty acids biosynthesis. Catalyzes the dehydration of short chain beta-hydroxyacyl-ACPs and long chain saturated and unsaturated beta-hydroxyacyl-ACPs. This Synechococcus elongatus (strain ATCC 33912 / PCC 7942 / FACHB-805) (Anacystis nidulans R2) protein is 3-hydroxyacyl-[acyl-carrier-protein] dehydratase FabZ.